Reading from the N-terminus, the 142-residue chain is Hemoglobin subunit alpha-A (142 aa).

The Globin domain occupies 2-142 (VLSANDKSNV…VGTVLTAKYR (141 aa)). His-59 contacts O2. His-88 serves as a coordination point for heme b.

Belongs to the globin family. Heterotetramer of two alpha chains and two beta chains. Red blood cells.

Its function is as follows. Involved in oxygen transport from the lung to the various peripheral tissues. The protein is Hemoglobin subunit alpha-A (HBAA) of Columba livia (Rock dove).